The chain runs to 543 residues: Chaperonin GroEL (543 aa).

Residues 30 to 33, Lys51, 87 to 91, Gly415, 479 to 481, and Asp495 each bind ATP; these read TLGP, DGTTT, and NAA.

It belongs to the chaperonin (HSP60) family. As to quaternary structure, forms a cylinder of 14 subunits composed of two heptameric rings stacked back-to-back. Interacts with the co-chaperonin GroES.

The protein resides in the cytoplasm. It catalyses the reaction ATP + H2O + a folded polypeptide = ADP + phosphate + an unfolded polypeptide.. Its function is as follows. Together with its co-chaperonin GroES, plays an essential role in assisting protein folding. The GroEL-GroES system forms a nano-cage that allows encapsulation of the non-native substrate proteins and provides a physical environment optimized to promote and accelerate protein folding. The polypeptide is Chaperonin GroEL (Francisella philomiragia subsp. philomiragia (strain ATCC 25017 / CCUG 19701 / FSC 153 / O#319-036)).